Reading from the N-terminus, the 117-residue chain is UPF0102 protein Swoo_0351 (117 aa).

It belongs to the UPF0102 family.

The polypeptide is UPF0102 protein Swoo_0351 (Shewanella woodyi (strain ATCC 51908 / MS32)).